The following is a 339-amino-acid chain: Undecaprenyl-phosphate 4-deoxy-4-formamido-L-arabinose transferase (339 aa).

The next 2 helical transmembrane spans lie at 235–255 and 270–290; these read LSII…MLIV and FVLF…MGLL.

Belongs to the glycosyltransferase 2 family.

It is found in the cell inner membrane. The catalysed reaction is UDP-4-deoxy-4-formamido-beta-L-arabinose + di-trans,octa-cis-undecaprenyl phosphate = 4-deoxy-4-formamido-alpha-L-arabinopyranosyl di-trans,octa-cis-undecaprenyl phosphate + UDP. It functions in the pathway glycolipid biosynthesis; 4-amino-4-deoxy-alpha-L-arabinose undecaprenyl phosphate biosynthesis; 4-amino-4-deoxy-alpha-L-arabinose undecaprenyl phosphate from UDP-4-deoxy-4-formamido-beta-L-arabinose and undecaprenyl phosphate: step 1/2. Its pathway is bacterial outer membrane biogenesis; lipopolysaccharide biosynthesis. Its function is as follows. Catalyzes the transfer of 4-deoxy-4-formamido-L-arabinose from UDP to undecaprenyl phosphate. The modified arabinose is attached to lipid A and is required for resistance to polymyxin and cationic antimicrobial peptides. The protein is Undecaprenyl-phosphate 4-deoxy-4-formamido-L-arabinose transferase of Pseudomonas fluorescens (strain ATCC BAA-477 / NRRL B-23932 / Pf-5).